The primary structure comprises 246 residues: 23S rRNA (guanosine-2'-O-)-methyltransferase RlmB (246 aa).

S-adenosyl-L-methionine-binding residues include G196, I216, and L225.

This sequence belongs to the class IV-like SAM-binding methyltransferase superfamily. RNA methyltransferase TrmH family. RlmB subfamily. As to quaternary structure, homodimer.

It is found in the cytoplasm. The enzyme catalyses guanosine(2251) in 23S rRNA + S-adenosyl-L-methionine = 2'-O-methylguanosine(2251) in 23S rRNA + S-adenosyl-L-homocysteine + H(+). Functionally, specifically methylates the ribose of guanosine 2251 in 23S rRNA. This Yersinia pestis protein is 23S rRNA (guanosine-2'-O-)-methyltransferase RlmB.